Here is a 294-residue protein sequence, read N- to C-terminus: tRNA dimethylallyltransferase (294 aa).

7 to 14 (GPTGSGKS) provides a ligand contact to ATP. Residue 9-14 (TGSGKS) participates in substrate binding.

The protein belongs to the IPP transferase family. In terms of assembly, monomer. It depends on Mg(2+) as a cofactor.

It catalyses the reaction adenosine(37) in tRNA + dimethylallyl diphosphate = N(6)-dimethylallyladenosine(37) in tRNA + diphosphate. Catalyzes the transfer of a dimethylallyl group onto the adenine at position 37 in tRNAs that read codons beginning with uridine, leading to the formation of N6-(dimethylallyl)adenosine (i(6)A). This chain is tRNA dimethylallyltransferase, found in Akkermansia muciniphila (strain ATCC BAA-835 / DSM 22959 / JCM 33894 / BCRC 81048 / CCUG 64013 / CIP 107961 / Muc).